A 907-amino-acid polypeptide reads, in one-letter code: Probable ubiquitin-conjugating enzyme E2 24 (907 aa).

Disordered stretches follow at residues 1–23 (MEMS…EHEE) and 485–509 (SSTV…EASS). Residues 495–509 (QDLSQKISQSDEASS) show a composition bias toward polar residues. Residues 662-822 (SWVKKVQQEW…AFLITCKSMI (161 aa)) form the UBC core domain. The active-site Glycyl thioester intermediate is the Cys-748.

It belongs to the ubiquitin-conjugating enzyme family. In terms of assembly, interacts with PHO1. Interacts with NLA. Expressed in the vascular tissues of cotyledons, leaves, roots, sepals, filaments, anthers and junctions between the inflorescence stems and siliques.

It localises to the golgi apparatus membrane. It is found in the endoplasmic reticulum membrane. The catalysed reaction is S-ubiquitinyl-[E1 ubiquitin-activating enzyme]-L-cysteine + [E2 ubiquitin-conjugating enzyme]-L-cysteine = [E1 ubiquitin-activating enzyme]-L-cysteine + S-ubiquitinyl-[E2 ubiquitin-conjugating enzyme]-L-cysteine.. Its pathway is protein modification; protein ubiquitination. In terms of biological role, E2 ubiquitin-protein ligase that mediates E1-dependent protein ubiquitination. Mediates PHO1 degradation through multivesicular body-mediated vacuolar proteolysis in response to inorganic phosphate (Pi) availability. Negatively regulates the protein abundance of PHF1 and PHT1s under Pi-sufficient conditions by facilitating the degradation of PHT1 proteins at the endomembrane. Functions cooperatively with NLA to regulate the abundance of the inorganic phosphate (Pi) transporters PHT1-1, PHT1-2 and PHT1-3 in different subcellular compartments. Regulates Pi homeostasis by mediating, cooperatively with NLA, polyubiquitination of PHT1-4 and its targeting for degradation. The protein is Probable ubiquitin-conjugating enzyme E2 24 of Arabidopsis thaliana (Mouse-ear cress).